The chain runs to 248 residues: Clathrin light chain A (248 aa).

Residues 1-93 (MAELDPFGAP…YQESNGPTDS (93 aa)) are disordered. Residues 13 to 25 (APGGPALGNGVAG) show a composition bias toward gly residues. An involved in binding clathrin heavy chain region spans residues 100–162 (VDRLQSEPES…QLQKTKASNR (63 aa)). Phosphoserine occurs at positions 105 and 206. The residue at position 223 (Lys223) is an N6-acetyllysine. Residue Ser236 is modified to Phosphoserine. Lys242 is modified (N6-acetyllysine).

Belongs to the clathrin light chain family. Clathrin coats are formed from molecules containing 3 heavy chains and 3 light chains. Interacts with CALY; the interaction stimulates clathrin self-assembly and clathrin-mediated endocytosis. Interacts with CKAP5 and TACC3 forming the TACC3/ch-TOG/clathrin complex located at spindle inter-microtubules bridges; the complex implicates clathrin triskelions.

The protein localises to the cytoplasmic vesicle membrane. Its subcellular location is the membrane. It localises to the coated pit. The protein resides in the cytoplasm. It is found in the cytoskeleton. The protein localises to the spindle. Clathrin is the major protein of the polyhedral coat of coated pits and vesicles. Acts as a component of the TACC3/ch-TOG/clathrin complex proposed to contribute to stabilization of kinetochore fibers of the mitotic spindle by acting as inter-microtubule bridge. The chain is Clathrin light chain A (Clta) from Rattus norvegicus (Rat).